Here is a 1270-residue protein sequence, read N- to C-terminus: DNA-directed RNA polymerase subunit beta (1270 aa).

It belongs to the RNA polymerase beta chain family. As to quaternary structure, the RNAP catalytic core consists of 2 alpha, 1 beta, 1 beta' and 1 omega subunit. When a sigma factor is associated with the core the holoenzyme is formed, which can initiate transcription.

The enzyme catalyses RNA(n) + a ribonucleoside 5'-triphosphate = RNA(n+1) + diphosphate. DNA-dependent RNA polymerase catalyzes the transcription of DNA into RNA using the four ribonucleoside triphosphates as substrates. In Christiangramia forsetii (strain DSM 17595 / CGMCC 1.15422 / KT0803) (Gramella forsetii), this protein is DNA-directed RNA polymerase subunit beta.